A 232-amino-acid chain; its full sequence is Phosphatidylserine decarboxylase proenzyme (232 aa).

Catalysis depends on Ser201, which acts as the Schiff-base intermediate with substrate; via pyruvic acid. The residue at position 201 (Ser201) is a Pyruvic acid (Ser); by autocatalysis.

The protein belongs to the phosphatidylserine decarboxylase family. PSD-A subfamily. Heterodimer of a large membrane-associated beta subunit and a small pyruvoyl-containing alpha subunit. Pyruvate serves as cofactor. In terms of processing, is synthesized initially as an inactive proenzyme. Formation of the active enzyme involves a self-maturation process in which the active site pyruvoyl group is generated from an internal serine residue via an autocatalytic post-translational modification. Two non-identical subunits are generated from the proenzyme in this reaction, and the pyruvate is formed at the N-terminus of the alpha chain, which is derived from the carboxyl end of the proenzyme. The post-translation cleavage follows an unusual pathway, termed non-hydrolytic serinolysis, in which the side chain hydroxyl group of the serine supplies its oxygen atom to form the C-terminus of the beta chain, while the remainder of the serine residue undergoes an oxidative deamination to produce ammonia and the pyruvoyl prosthetic group on the alpha chain.

The protein resides in the cell membrane. It carries out the reaction a 1,2-diacyl-sn-glycero-3-phospho-L-serine + H(+) = a 1,2-diacyl-sn-glycero-3-phosphoethanolamine + CO2. The protein operates within phospholipid metabolism; phosphatidylethanolamine biosynthesis; phosphatidylethanolamine from CDP-diacylglycerol: step 2/2. Functionally, catalyzes the formation of phosphatidylethanolamine (PtdEtn) from phosphatidylserine (PtdSer). This Mycolicibacterium gilvum (strain PYR-GCK) (Mycobacterium gilvum (strain PYR-GCK)) protein is Phosphatidylserine decarboxylase proenzyme.